The primary structure comprises 361 residues: Phospho-N-acetylmuramoyl-pentapeptide-transferase (361 aa).

A run of 10 helical transmembrane segments spans residues 28 to 48, 74 to 94, 99 to 119, 133 to 153, 168 to 188, 203 to 223, 236 to 256, 263 to 283, 288 to 308, and 338 to 358; these read LAIIITLSLSFITGPILIKFL, TMGGIMIILSSCLSTLLLADL, IWITLFGFISFGIIGFMDDYA, SKLLLQGIISLIICILLEYLD, LSLDLGYFYIVFAIFVIVGSS, VPIAFTAGSFALISYLVGNLI, TGELTVLCAGLVGSCLGFLWF, VFMGDTGSLSLGGVLGIISVI, IVLAIVGGLFVIETASVILQV, and KVVIRFWIISVIFALIGLSSL.

It belongs to the glycosyltransferase 4 family. MraY subfamily. Requires Mg(2+) as cofactor.

It is found in the cell inner membrane. It carries out the reaction UDP-N-acetyl-alpha-D-muramoyl-L-alanyl-gamma-D-glutamyl-meso-2,6-diaminopimeloyl-D-alanyl-D-alanine + di-trans,octa-cis-undecaprenyl phosphate = di-trans,octa-cis-undecaprenyl diphospho-N-acetyl-alpha-D-muramoyl-L-alanyl-D-glutamyl-meso-2,6-diaminopimeloyl-D-alanyl-D-alanine + UMP. It functions in the pathway cell wall biogenesis; peptidoglycan biosynthesis. Functionally, catalyzes the initial step of the lipid cycle reactions in the biosynthesis of the cell wall peptidoglycan: transfers peptidoglycan precursor phospho-MurNAc-pentapeptide from UDP-MurNAc-pentapeptide onto the lipid carrier undecaprenyl phosphate, yielding undecaprenyl-pyrophosphoryl-MurNAc-pentapeptide, known as lipid I. The sequence is that of Phospho-N-acetylmuramoyl-pentapeptide-transferase from Rickettsia felis (strain ATCC VR-1525 / URRWXCal2) (Rickettsia azadi).